The primary structure comprises 251 residues: Imidazole glycerol phosphate synthase subunit HisF (251 aa).

Catalysis depends on residues Asp11 and Asp130.

The protein belongs to the HisA/HisF family. In terms of assembly, heterodimer of HisH and HisF.

It localises to the cytoplasm. It catalyses the reaction 5-[(5-phospho-1-deoxy-D-ribulos-1-ylimino)methylamino]-1-(5-phospho-beta-D-ribosyl)imidazole-4-carboxamide + L-glutamine = D-erythro-1-(imidazol-4-yl)glycerol 3-phosphate + 5-amino-1-(5-phospho-beta-D-ribosyl)imidazole-4-carboxamide + L-glutamate + H(+). It participates in amino-acid biosynthesis; L-histidine biosynthesis; L-histidine from 5-phospho-alpha-D-ribose 1-diphosphate: step 5/9. Its function is as follows. IGPS catalyzes the conversion of PRFAR and glutamine to IGP, AICAR and glutamate. The HisF subunit catalyzes the cyclization activity that produces IGP and AICAR from PRFAR using the ammonia provided by the HisH subunit. This chain is Imidazole glycerol phosphate synthase subunit HisF, found in Pelagibacter ubique (strain HTCC1062).